A 297-amino-acid polypeptide reads, in one-letter code: tRNA uridine(34) hydroxylase (297 aa).

In terms of domain architecture, Rhodanese spans 133 to 228 (SGDEVVFFDG…YGETFKDQGL (96 aa)). Cysteine 188 serves as the catalytic Cysteine persulfide intermediate.

The protein belongs to the TrhO family.

The enzyme catalyses uridine(34) in tRNA + AH2 + O2 = 5-hydroxyuridine(34) in tRNA + A + H2O. Functionally, catalyzes oxygen-dependent 5-hydroxyuridine (ho5U) modification at position 34 in tRNAs. The sequence is that of tRNA uridine(34) hydroxylase from Pseudarthrobacter chlorophenolicus (strain ATCC 700700 / DSM 12829 / CIP 107037 / JCM 12360 / KCTC 9906 / NCIMB 13794 / A6) (Arthrobacter chlorophenolicus).